The following is a 349-amino-acid chain: Fe(3+) ions import ATP-binding protein FbpC (349 aa).

In terms of domain architecture, ABC transporter spans 4–236 (LDFNKIGKSY…PIDEPTATFL (233 aa)). ATP is bound at residue 36–43 (GPSGSGKT).

It belongs to the ABC transporter superfamily. Fe(3+) ion importer (TC 3.A.1.10) family. As to quaternary structure, the complex is composed of two ATP-binding proteins (FbpC), two transmembrane proteins (FbpB) and a solute-binding protein (FbpA).

It is found in the cell inner membrane. It catalyses the reaction Fe(3+)(out) + ATP + H2O = Fe(3+)(in) + ADP + phosphate + H(+). In terms of biological role, part of the ABC transporter complex FbpABC involved in Fe(3+) ions import. Responsible for energy coupling to the transport system. In Yersinia enterocolitica, this protein is Fe(3+) ions import ATP-binding protein FbpC.